A 557-amino-acid chain; its full sequence is 2-isopropylmalate synthase (557 aa).

Residues P33–D307 enclose the Pyruvate carboxyltransferase domain. Mg(2+) is bound by residues D42, H246, H248, and N282. The tract at residues A439–A557 is regulatory domain.

The protein belongs to the alpha-IPM synthase/homocitrate synthase family. LeuA type 2 subfamily. Homodimer. Mg(2+) is required as a cofactor.

The protein resides in the cytoplasm. It catalyses the reaction 3-methyl-2-oxobutanoate + acetyl-CoA + H2O = (2S)-2-isopropylmalate + CoA + H(+). The protein operates within amino-acid biosynthesis; L-leucine biosynthesis; L-leucine from 3-methyl-2-oxobutanoate: step 1/4. Catalyzes the condensation of the acetyl group of acetyl-CoA with 3-methyl-2-oxobutanoate (2-ketoisovalerate) to form 3-carboxy-3-hydroxy-4-methylpentanoate (2-isopropylmalate). This is 2-isopropylmalate synthase from Azotobacter vinelandii (strain DJ / ATCC BAA-1303).